Consider the following 203-residue polypeptide: MSEHRIPVAADKQISPPISAGEQKGCKGLKRTDLMLRFAAFVCCAVTMVVLITDKQTSAIQVPGFNNLTITKTVSFDLAKAFVYLVSAAGIGAGYTLLVLVLSIISAERSKAIAWFIFVFDQLITYVLLAAAAASTEVAYMGAHAPPEASWLKVCSLFGRFCHQLGASLVTSFISTVLFAFSAAISAYYLFSNTNVRPAYSKG.

Residues methionine 1 to arginine 31 are Cytoplasmic-facing. The helical transmembrane segment at threonine 32 to isoleucine 52 threads the bilayer. Residues threonine 53–tyrosine 84 lie on the Extracellular side of the membrane. Residue asparagine 67 is glycosylated (N-linked (GlcNAc...) asparagine). The helical transmembrane segment at leucine 85–isoleucine 105 threads the bilayer. Residues serine 106–lysine 111 are Cytoplasmic-facing. A helical transmembrane segment spans residues alanine 112–alanine 132. Topologically, residues alanine 133–glutamine 164 are extracellular. The chain crosses the membrane as a helical span at residues leucine 165–isoleucine 185. Residues serine 186–glycine 203 are Cytoplasmic-facing.

It belongs to the Casparian strip membrane proteins (CASP) family. In terms of assembly, homodimer and heterodimers.

The protein localises to the cell membrane. The chain is CASP-like protein 2U5 from Selaginella moellendorffii (Spikemoss).